Consider the following 520-residue polypeptide: MQSWQKPLVADFRSVVGEDQPVPLHMWDTASREVTPLTPSDEATVYVCGITPYDSTHLGHAATYVTFDVLNRQLLANGHRVNFVQNVTDVDDPLFERAQRDGVDWQELGEEQTDLFRQDMANLGVIPPTSYIGAVEAIPDVIDMVSTLLDNGSAYVVDDPTYPDVYADRTATPQFGYESRYDEATMEQFFAERGGDPDRPGKRDPLDSLLWRAERPGEPAWDSPFGRGRPGWHIECAAIAARYLGSHFDVQGGGEDLIFPHHEYSAAHVEAACGVERMADHYMHTGLIALGGVKMSKSLGNLVFVSRLCNAGTDPSSIRLALYAGHYRDQRNWSDALLAAASRRLALWRTAVETVHAHNDADSEARARRLVDDVRQALATDLDTPAAVDLVDEWAGSIVDKEKIWDLPGVDGKNAHESLSVPVPCAAPATDDKLSVAQGKITILDDGKDSEADAKSVELASATAGTQRCGAHSHASGELTVDLLPAPHQRGDAPSALYSHLSPAAALVAGCVDALLGLKL.

C48 provides a ligand contact to Zn(2+). Residues 48 to 51 (CGIT), T63, and 86 to 88 (NVT) contribute to the L-cysteinyl-5'-AMP site. The short motif at 50-60 (ITPYDSTHLGH) is the 'HIGH' region element. The short motif at 192–197 (ERGGDP) is the 'ERGGDP' region element. W232 is an L-cysteinyl-5'-AMP binding site. C236 contacts Zn(2+). 254-256 (GED) contributes to the L-cysteinyl-5'-AMP binding site. H261 contributes to the Zn(2+) binding site. An L-cysteinyl-5'-AMP-binding site is contributed by I288. The 'KMSKS' region signature appears at 294 to 298 (KMSKS).

The protein belongs to the class-I aminoacyl-tRNA synthetase family. MshC subfamily. As to quaternary structure, monomer. It depends on Zn(2+) as a cofactor.

It carries out the reaction 1D-myo-inositol 2-amino-2-deoxy-alpha-D-glucopyranoside + L-cysteine + ATP = 1D-myo-inositol 2-(L-cysteinylamino)-2-deoxy-alpha-D-glucopyranoside + AMP + diphosphate + H(+). Catalyzes the ATP-dependent condensation of GlcN-Ins and L-cysteine to form L-Cys-GlcN-Ins. This chain is L-cysteine:1D-myo-inositol 2-amino-2-deoxy-alpha-D-glucopyranoside ligase, found in Corynebacterium kroppenstedtii (strain DSM 44385 / JCM 11950 / CIP 105744 / CCUG 35717).